The following is a 74-amino-acid chain: MSTGIWVLIVIIAAVLGFVGGFFAARKYMEDYLKKNPPINEQMMRTMMIQMGQKPSEKKLHQMMNAMKNNYGKK.

A helical transmembrane segment spans residues 5 to 25; the sequence is IWVLIVIIAAVLGFVGGFFAA.

Belongs to the UPF0154 family.

The protein localises to the cell membrane. This is UPF0154 protein LSL_0542 from Ligilactobacillus salivarius (strain UCC118) (Lactobacillus salivarius).